Consider the following 156-residue polypeptide: Small ribosomal subunit protein uS7 (156 aa).

Belongs to the universal ribosomal protein uS7 family. As to quaternary structure, part of the 30S ribosomal subunit. Contacts proteins S9 and S11.

One of the primary rRNA binding proteins, it binds directly to 16S rRNA where it nucleates assembly of the head domain of the 30S subunit. Is located at the subunit interface close to the decoding center, probably blocks exit of the E-site tRNA. This chain is Small ribosomal subunit protein uS7, found in Streptomyces avermitilis (strain ATCC 31267 / DSM 46492 / JCM 5070 / NBRC 14893 / NCIMB 12804 / NRRL 8165 / MA-4680).